The chain runs to 119 residues: C-X-C motif chemokine 17 (119 aa).

A signal peptide spans 1 to 21; sequence MKVLISSLLLLLPLMLMSMVS. 2 disulfide bridges follow: Cys-75-Cys-103 and Cys-77-Cys-110. Residues 81-100 are disordered; it reads KGNVKKTRHQRHHRKPNKHS. The segment covering 82–100 has biased composition (basic residues); the sequence is GNVKKTRHQRHHRKPNKHS.

It belongs to the intercrine alpha (chemokine CxC) family. In terms of processing, likely to undergo an endoproteolytic process to form a four-cysteine-containing mature peptide with a canonical CXC chemokine scaffold after secretion. Detected in trachea, stomach, lung and skeletal muscle. Detected in intestine and in normal and asthmatic lung (at protein level). Breast tumors showed 3- to 24-fold up-regulation.

It localises to the secreted. Chemokine that acts as a chemoattractant for monocytes, macrophages and dendritic cells. Plays a role in angiogenesis and possibly in the development of tumors. Acts as an anti-inflammatory in the stomach. May play a role in the innate defense against infections. Activates the C-X-C chemokine receptor GPR35 to induce a rapid and transient rise in the level of intracellular calcium ions. Functionally, seems to exhibit much higher chemoattractant potency on monocytes and macrophages than 6-Cys CXCL17. This is C-X-C motif chemokine 17 (CXCL17) from Homo sapiens (Human).